The sequence spans 96 residues: Histone-like protein p6 (96 aa).

Residues 1–19 (MAKMMQREITKTTVNVAKM) mediate DNA binding.

It belongs to the phi29likevirus histone-like protein p6 family. In terms of assembly, homodimer. Homomultimer. Binds to double-stranded DNA giving rise to multimeric nucleoprotein complexes. Binding specificity for the viral DNA is based on supercoiling, the viral genome having a negative superhelicity lower than that of plasmid DNA. Interacts with the DNA replication protein p17; this interaction optimizes the binding of protein p6 at the viral DNA ends, thus favoring the initiation of replication.

Histone-like nucleoprotein that binds to the viral dsDNA and responsible for wrapping and compacting the viral DNA about 4-fold. Forms a nucleoprotein complex in which the DNA adopts a right-handed toroidal conformation winding around a protein core. Binds ito most, if not all, the viral genome, although with different affinity, the highest one corresponding to the genome ends. The formation of the nucleoprotein complex at the genome ends, activates the initiation of viral DNA replication. The binding of p6 would recruit the complex formed by the TP and the DNA polymerase to the origin. Protein p6 also represses early transcription from promoter C2, and, together with protein p4, represses transcription from promoters A2b and A2c and activates late transcription from promoter A3. Protein p6 is therefore involved in the early to late transcription switch. The formation of the nucleoprotein complex at the right end of the phage genome where the early promoter C2 is located affects local topology, which may contribute to the promoter repression. In Bacillus phage PZA (Bacteriophage PZA), this protein is Histone-like protein p6 (6).